We begin with the raw amino-acid sequence, 543 residues long: Chaperonin GroEL (543 aa).

ATP contacts are provided by residues 29–32 (TLGP), 86–90 (DGTTT), Gly-413, 477–479 (DAL), and Asp-493. The segment at 524 to 543 (EKDKPEMPGGAPGMGMGGMY) is disordered. The span at 533–543 (GAPGMGMGGMY) shows a compositional bias: gly residues.

The protein belongs to the chaperonin (HSP60) family. Forms a cylinder of 14 subunits composed of two heptameric rings stacked back-to-back. Interacts with the co-chaperonin GroES.

Its subcellular location is the cytoplasm. The enzyme catalyses ATP + H2O + a folded polypeptide = ADP + phosphate + an unfolded polypeptide.. Together with its co-chaperonin GroES, plays an essential role in assisting protein folding. The GroEL-GroES system forms a nano-cage that allows encapsulation of the non-native substrate proteins and provides a physical environment optimized to promote and accelerate protein folding. This is Chaperonin GroEL from Clostridium acetobutylicum (strain ATCC 824 / DSM 792 / JCM 1419 / IAM 19013 / LMG 5710 / NBRC 13948 / NRRL B-527 / VKM B-1787 / 2291 / W).